Reading from the N-terminus, the 378-residue chain is Chaperone protein DnaJ 2 (378 aa).

Residues 4–68 (DYYAVLGVRR…QKKQVYDLGG (65 aa)) enclose the J domain. The CR-type zinc finger occupies 130 to 212 (GTTKDIQVET…CAGDGRVRSR (83 aa)). Residues C143, C146, C160, C163, C186, C189, C200, and C203 each contribute to the Zn(2+) site. 4 CXXCXGXG motif repeats span residues 143-150 (CTTCSGEG), 160-167 (CDMCRGRG), 186-193 (CPQCQGFG), and 200-207 (CPECAGDG). Residues 351 to 378 (RGEERPTGQFQPGQQGLFSRLKDAFNGR) are disordered. Over residues 358 to 367 (GQFQPGQQGL) the composition is skewed to polar residues.

The protein belongs to the DnaJ family. In terms of assembly, homodimer. The cofactor is Zn(2+).

The protein resides in the cytoplasm. Functionally, participates actively in the response to hyperosmotic and heat shock by preventing the aggregation of stress-denatured proteins and by disaggregating proteins, also in an autonomous, DnaK-independent fashion. Unfolded proteins bind initially to DnaJ; upon interaction with the DnaJ-bound protein, DnaK hydrolyzes its bound ATP, resulting in the formation of a stable complex. GrpE releases ADP from DnaK; ATP binding to DnaK triggers the release of the substrate protein, thus completing the reaction cycle. Several rounds of ATP-dependent interactions between DnaJ, DnaK and GrpE are required for fully efficient folding. Also involved, together with DnaK and GrpE, in the DNA replication of plasmids through activation of initiation proteins. The polypeptide is Chaperone protein DnaJ 2 (Streptomyces avermitilis (strain ATCC 31267 / DSM 46492 / JCM 5070 / NBRC 14893 / NCIMB 12804 / NRRL 8165 / MA-4680)).